Here is a 351-residue protein sequence, read N- to C-terminus: Dihydroorotate dehydrogenase (quinone) (351 aa).

FMN contacts are provided by residues 61-65 (AGLDK) and threonine 85. Lysine 65 is a substrate binding site. 110–114 (NRMGF) serves as a coordination point for substrate. Positions 139 and 172 each coordinate FMN. Asparagine 172 lines the substrate pocket. The Nucleophile role is filled by serine 175. A substrate-binding site is contributed by asparagine 177. 2 residues coordinate FMN: lysine 217 and threonine 245. Residue 246–247 (NT) coordinates substrate. FMN contacts are provided by residues glycine 268, glycine 297, and 318–319 (YS).

This sequence belongs to the dihydroorotate dehydrogenase family. Type 2 subfamily. As to quaternary structure, monomer. FMN is required as a cofactor.

It localises to the cell membrane. It carries out the reaction (S)-dihydroorotate + a quinone = orotate + a quinol. Its pathway is pyrimidine metabolism; UMP biosynthesis via de novo pathway; orotate from (S)-dihydroorotate (quinone route): step 1/1. Its function is as follows. Catalyzes the conversion of dihydroorotate to orotate with quinone as electron acceptor. In Xanthomonas axonopodis pv. citri (strain 306), this protein is Dihydroorotate dehydrogenase (quinone).